The sequence spans 265 residues: Proline-rich protein 23B (265 aa).

The span at 1 to 18 (MVSRPRSPSAFPAPWWGQ) shows a compositional bias: low complexity. Disordered stretches follow at residues 1–49 (MVSR…EDPA) and 226–265 (PSSP…LFQA). The span at 226-237 (PSSPLQPLPPSP) shows a compositional bias: pro residues. A compositionally biased stretch (basic residues) spans 256-265 (CKARRRLFQA).

Belongs to the PRR23 family.

The chain is Proline-rich protein 23B (PRR23B) from Homo sapiens (Human).